Here is a 384-residue protein sequence, read N- to C-terminus: Putative 8-amino-7-oxononanoate synthase (384 aa).

Arg-18 lines the substrate pocket. 105–106 (GY) serves as a coordination point for pyridoxal 5'-phosphate. Substrate is bound at residue His-130. Pyridoxal 5'-phosphate contacts are provided by residues Ser-176, 201–204 (DDAH), and 233–236 (TLSK). Lys-236 bears the N6-(pyridoxal phosphate)lysine mark. Substrate is bound at residue Thr-349.

The protein belongs to the class-II pyridoxal-phosphate-dependent aminotransferase family. BioF subfamily. As to quaternary structure, homodimer. It depends on pyridoxal 5'-phosphate as a cofactor.

It catalyses the reaction 6-carboxyhexanoyl-[ACP] + L-alanine + H(+) = (8S)-8-amino-7-oxononanoate + holo-[ACP] + CO2. The protein operates within cofactor biosynthesis; biotin biosynthesis. Functionally, catalyzes the decarboxylative condensation of pimeloyl-[acyl-carrier protein] and L-alanine to produce 8-amino-7-oxononanoate (AON), [acyl-carrier protein], and carbon dioxide. The polypeptide is Putative 8-amino-7-oxononanoate synthase (bioF) (Desulfovibrio desulfuricans (strain ATCC 27774 / DSM 6949 / MB)).